The chain runs to 130 residues: Small ribosomal subunit protein uS9 (130 aa).

This sequence belongs to the universal ribosomal protein uS9 family.

The protein is Small ribosomal subunit protein uS9 of Bordetella pertussis (strain Tohama I / ATCC BAA-589 / NCTC 13251).